Here is a 263-residue protein sequence, read N- to C-terminus: MSLYDDKYLAIANDILENGYFDNNRTGVKTYKLPHQIMQFNLEKEFPILTTKFVAFKTAVKELLWIFKDQSNSVKELQSQNVKIWDEWMMEDGTIGTSYGWIVKKFDQIDKLIDALKNNPQDRRMMINLWQIPYLDSAPLYPCCFLTMWDVTDGKLNCMLVQRSGDWGLGVPFNTSQYAVLVHLLAQVTGLKPGLFTHVINNAHIYENQVDGLKLQLTRKNDAYNAPKLWINPEITNFYDFTPDDIKLEDYKHHESIKMDVSV.

Residues Arg25 and 123-124 each bind dUMP; that span reads RR. Cys143 (nucleophile) is an active-site residue. DUMP contacts are provided by residues 163 to 166, Asn174, and 204 to 206; these read RSGD and HIY. Asp166 serves as a coordination point for (6R)-5,10-methylene-5,6,7,8-tetrahydrofolate. Ser262 contributes to the (6R)-5,10-methylene-5,6,7,8-tetrahydrofolate binding site.

This sequence belongs to the thymidylate synthase family. Bacterial-type ThyA subfamily. In terms of assembly, homodimer.

The protein resides in the cytoplasm. The enzyme catalyses dUMP + (6R)-5,10-methylene-5,6,7,8-tetrahydrofolate = 7,8-dihydrofolate + dTMP. Its pathway is pyrimidine metabolism; dTTP biosynthesis. In terms of biological role, catalyzes the reductive methylation of 2'-deoxyuridine-5'-monophosphate (dUMP) to 2'-deoxythymidine-5'-monophosphate (dTMP) while utilizing 5,10-methylenetetrahydrofolate (mTHF) as the methyl donor and reductant in the reaction, yielding dihydrofolate (DHF) as a by-product. This enzymatic reaction provides an intracellular de novo source of dTMP, an essential precursor for DNA biosynthesis. This is Thymidylate synthase from Clostridium beijerinckii (strain ATCC 51743 / NCIMB 8052) (Clostridium acetobutylicum).